A 435-amino-acid polypeptide reads, in one-letter code: Proline and serine-rich protein 2 (435 aa).

Positions 1 to 10 (MPVTHRKSDA) are enriched in basic and acidic residues. The disordered stretch occupies residues 1-22 (MPVTHRKSDASDMNSDTSPSCR). Ser-8 carries the post-translational modification Phosphoserine. Residues 11–20 (SDMNSDTSPS) are compositionally biased toward polar residues. Ser-43 is subject to Phosphoserine. Thr-45 carries the post-translational modification Phosphothreonine. Low complexity-rich tracts occupy residues 92–102 (PSLEESTSSPS) and 113–126 (PAPGAGEAEGLPEG). Disordered regions lie at residues 92–276 (PSLE…RAAV) and 295–420 (AFPA…SEEA). A Phosphothreonine modification is found at Thr-146. Over residues 146-169 (TPPPPDPPAPETLLAPPPLPSTPD) the composition is skewed to pro residues. Ser-166 is modified (phosphoserine). The residue at position 167 (Thr-167) is a Phosphothreonine. Phosphoserine is present on residues Ser-179, Ser-212, and Ser-215. Residues 228-237 (PAARGPRSGD) show a composition bias toward low complexity. Asymmetric dimethylarginine; alternate is present on Arg-252. Arg-252 carries the post-translational modification Omega-N-methylarginine; alternate. Gly residues predominate over residues 302 to 311 (AGEGAPGGGS). The residue at position 312 (Ser-312) is a Phosphoserine. Arg-320 is subject to Omega-N-methylarginine; alternate. A Dimethylated arginine; alternate modification is found at Arg-320. Arg-378 carries the post-translational modification Omega-N-methylarginine. Position 400 is a phosphoserine (Ser-400). An Omega-N-methylarginine modification is found at Arg-414.

The chain is Proline and serine-rich protein 2 (PROSER2) from Homo sapiens (Human).